The sequence spans 149 residues: Putative eggshell protein (149 aa).

A run of 6 repeats spans residues tyrosine 1 to lysine 5, tyrosine 6 to lysine 10, tyrosine 11 to lysine 15, tyrosine 16 to lysine 20, tyrosine 21 to lysine 25, and tyrosine 26 to lysine 30. The segment at tyrosine 1–lysine 64 is 13 X 5 AA approximate tandem repeats of Y-G-Y-[DE]-K. The stretch at glycine 31–lysine 34 is one 7; truncated repeat. Repeat copies occupy residues tyrosine 35–lysine 39, tyrosine 40–lysine 44, and tyrosine 45–lysine 49. Residues tyrosine 50 to lysine 54 form an 11; approximate repeat. The stretch at tyrosine 55 to lysine 59 is repeat 12. The stretch at tyrosine 60 to lysine 64 is one 13; approximate repeat. Residues tyrosine 105–histidine 124 are compositionally biased toward basic and acidic residues. The tract at residues tyrosine 105 to tyrosine 149 is disordered. Residues aspartate 125–histidine 141 show a composition bias toward basic residues.

In Schistosoma mansoni (Blood fluke), this protein is Putative eggshell protein.